We begin with the raw amino-acid sequence, 347 residues long: tRNA N6-adenosine threonylcarbamoyltransferase (347 aa).

Residues His-113 and His-117 each coordinate Fe cation. Substrate is bound by residues 136–140, Asp-170, Gly-183, Asp-187, and Asn-282; that span reads LVSGG. Asp-310 is a binding site for Fe cation.

This sequence belongs to the KAE1 / TsaD family. Fe(2+) serves as cofactor.

It is found in the cytoplasm. The catalysed reaction is L-threonylcarbamoyladenylate + adenosine(37) in tRNA = N(6)-L-threonylcarbamoyladenosine(37) in tRNA + AMP + H(+). In terms of biological role, required for the formation of a threonylcarbamoyl group on adenosine at position 37 (t(6)A37) in tRNAs that read codons beginning with adenine. Is involved in the transfer of the threonylcarbamoyl moiety of threonylcarbamoyl-AMP (TC-AMP) to the N6 group of A37, together with TsaE and TsaB. TsaD likely plays a direct catalytic role in this reaction. The protein is tRNA N6-adenosine threonylcarbamoyltransferase of Cutibacterium acnes (strain DSM 16379 / KPA171202) (Propionibacterium acnes).